Consider the following 627-residue polypeptide: Chaperone protein DnaK (627 aa).

A Phosphothreonine; by autocatalysis modification is found at Thr197. Residues 596 to 615 (MYAQGGDQGQQAAPQQEQSG) show a composition bias toward low complexity. The tract at residues 596–627 (MYAQGGDQGQQAAPQQEQSGDNVEDVEFEEVK) is disordered. Positions 617–627 (NVEDVEFEEVK) are enriched in acidic residues.

This sequence belongs to the heat shock protein 70 family.

Acts as a chaperone. The chain is Chaperone protein DnaK from Flavobacterium johnsoniae (strain ATCC 17061 / DSM 2064 / JCM 8514 / BCRC 14874 / CCUG 350202 / NBRC 14942 / NCIMB 11054 / UW101) (Cytophaga johnsonae).